Reading from the N-terminus, the 150-residue chain is Lymphotoxin-beta (150 aa).

In terms of domain architecture, THD spans 1–149; it reads AWITGQGLGW…GKTFFGAVMV (149 aa). Asn128 carries N-linked (GlcNAc...) asparagine glycosylation.

Belongs to the tumor necrosis factor family. In terms of assembly, heterotrimer of either two LTB and one LTA subunits or (less prevalent) two LTA and one LTB subunits.

The protein resides in the membrane. In terms of biological role, cytokine that binds to LTBR/TNFRSF3. May play a specific role in immune response regulation. Provides the membrane anchor for the attachment of the heterotrimeric complex to the cell surface. In Sus scrofa (Pig), this protein is Lymphotoxin-beta (LTB).